The following is a 408-amino-acid chain: Tryptophan synthase beta chain (408 aa).

At lysine 103 the chain carries N6-(pyridoxal phosphate)lysine.

This sequence belongs to the TrpB family. As to quaternary structure, tetramer of two alpha and two beta chains. Pyridoxal 5'-phosphate is required as a cofactor.

It catalyses the reaction (1S,2R)-1-C-(indol-3-yl)glycerol 3-phosphate + L-serine = D-glyceraldehyde 3-phosphate + L-tryptophan + H2O. It functions in the pathway amino-acid biosynthesis; L-tryptophan biosynthesis; L-tryptophan from chorismate: step 5/5. Functionally, the beta subunit is responsible for the synthesis of L-tryptophan from indole and L-serine. This chain is Tryptophan synthase beta chain, found in Koribacter versatilis (strain Ellin345).